The following is a 596-amino-acid chain: Elongation factor 4 (596 aa).

A tr-type G domain is found at 2–184 (KHIRNFSIIA…VIVEQIPPPE (183 aa)). GTP is bound by residues 14-19 (DHGKST) and 131-134 (NKID).

It belongs to the TRAFAC class translation factor GTPase superfamily. Classic translation factor GTPase family. LepA subfamily.

The protein localises to the cell inner membrane. It catalyses the reaction GTP + H2O = GDP + phosphate + H(+). Required for accurate and efficient protein synthesis under certain stress conditions. May act as a fidelity factor of the translation reaction, by catalyzing a one-codon backward translocation of tRNAs on improperly translocated ribosomes. Back-translocation proceeds from a post-translocation (POST) complex to a pre-translocation (PRE) complex, thus giving elongation factor G a second chance to translocate the tRNAs correctly. Binds to ribosomes in a GTP-dependent manner. The sequence is that of Elongation factor 4 from Shewanella piezotolerans (strain WP3 / JCM 13877).